Reading from the N-terminus, the 363-residue chain is Chorismate synthase (363 aa).

Residues Arg-48 and Arg-54 each contribute to the NADP(+) site. FMN-binding positions include 131–133 (RSS), 244–245 (NA), Gly-288, 303–307 (KPTSS), and Arg-329.

The protein belongs to the chorismate synthase family. As to quaternary structure, homotetramer. The cofactor is FMNH2.

It catalyses the reaction 5-O-(1-carboxyvinyl)-3-phosphoshikimate = chorismate + phosphate. The protein operates within metabolic intermediate biosynthesis; chorismate biosynthesis; chorismate from D-erythrose 4-phosphate and phosphoenolpyruvate: step 7/7. In terms of biological role, catalyzes the anti-1,4-elimination of the C-3 phosphate and the C-6 proR hydrogen from 5-enolpyruvylshikimate-3-phosphate (EPSP) to yield chorismate, which is the branch point compound that serves as the starting substrate for the three terminal pathways of aromatic amino acid biosynthesis. This reaction introduces a second double bond into the aromatic ring system. This Hyphomonas neptunium (strain ATCC 15444) protein is Chorismate synthase.